Consider the following 149-residue polypeptide: Protein AE7-like 2 (149 aa).

It belongs to the MIP18 family.

Functionally, may play a role in chromosome segregation through establishment of sister chromatid cohesion. Unable to complement ae7 mutants, and thus probably not involved in the cytosolic iron-sulfur assembly (CIA) pathway. This is Protein AE7-like 2 from Arabidopsis thaliana (Mouse-ear cress).